The sequence spans 955 residues: MVEVMKFTKNKIAALLSLTLLGVYGCGSTPSSSDAEGAVEDVGGTIPDFESAAFFKKVKKDHRKAEVVSDQGVTSGSSALKVNFDSVSEANKFKYWPNVKVHPDSGFWNWNAKGSLSLDITNPTDSPANIILKLADNVGVMGSGDNQLNYAVNVPAGETVPVEMLFNGTKRKLDGYWGGEKINLRNIVEFQIFVQGPMDAQTVIIDNFNLVDATGDFIEASGQEVKVSGPIPTVASITSFDEGQPTFVAFDRSAAATVTELKTDMGGLLAVKLAATNAYPNITFKAPQPWDWSEYGDFSLAFDLESKADEPLQLFVRVDDAENENWGGTANGVVDSMSSYVTLAPGDDGTFYLPLGQTGSQIVSGMRAEPPKKSYNAQAISYGWGEKSLDTSNIVSFQLYLQNPTKDAEFNIKSVRLIPNIDADATRYEGLIDQYGQFTGSEWPKKITEDEELETMGKLAKMSLKSTSQMPGRSIYGGWADGPKLKGTGFFRTEKVDGKWSLVDPQGNLFFATGVDNIRMDDTVTITGHDFADKDKRSGKEVASEVRRSMFTWLPEDDDVLAENYDYANWVHSGALKKGEVFSFYGANLQRKYGGTFSEAEKVWKDITIDRMVDWGFTTLGNWADPMFYDNKKVAYVANGWIFGDHARISTGNDYWGPIHDPFDPEFVNSVKAMTKKLMTEVDKNDPWMMGVFVDNEISWGNTKNDANHYGLVVNALSYDMKKSPAKAAFTEHLKEKYWAIEDLNTSWGVKVASWAEFEKSFDHRSRLSKNMKKDYAEMLEMLSAKYFSTVRAELKKVLPNHLYLGAPFADWGVTPEIAKGAAPYVDVMSYNLYAEDLNSKGDWSKLAELDKPSIIGEFHFGSTDSGLFHGGIVSAASQQDRAKKYTNYMNSIADNPYFVGAHWFQYIDSPTTGRAWDGENYNVGFVSITDTPYVPLVEAAKKFNQDVYMLRYKK.

This sequence belongs to the glycosyl hydrolase 50 family.

It catalyses the reaction Hydrolysis of (1-&gt;4)-beta-D-galactosidic linkages in agarose, giving the tetramer as the predominant product.. In terms of biological role, hydrolyzes agarose to yield predominantly neoagarotetraose and neoagarohexaose. This is Beta-agarase B (agaB) from Vibrio sp. (strain JT0107).